Reading from the N-terminus, the 880-residue chain is Alanine--tRNA ligase (880 aa).

Zn(2+)-binding residues include His-566, His-570, Cys-668, and His-672.

The protein belongs to the class-II aminoacyl-tRNA synthetase family. It depends on Zn(2+) as a cofactor.

Its subcellular location is the cytoplasm. The catalysed reaction is tRNA(Ala) + L-alanine + ATP = L-alanyl-tRNA(Ala) + AMP + diphosphate. Catalyzes the attachment of alanine to tRNA(Ala) in a two-step reaction: alanine is first activated by ATP to form Ala-AMP and then transferred to the acceptor end of tRNA(Ala). Also edits incorrectly charged Ser-tRNA(Ala) and Gly-tRNA(Ala) via its editing domain. The sequence is that of Alanine--tRNA ligase from Nostoc punctiforme (strain ATCC 29133 / PCC 73102).